The following is a 379-amino-acid chain: Histone-lysine N-methyltransferase ATXR5 (379 aa).

Low complexity predominate over residues 1–15 (MATWNASSPAASPCS). The tract at residues 1 to 42 (MATWNASSPAASPCSSRRRTKAPARRPSSESPPPRKMKSMAE) is disordered. A chloroplast-targeting transit peptide spans 1–44 (MATWNASSPAASPCSSRRRTKAPARRPSSESPPPRKMKSMAEIM). Residues 64-114 (NVTCEKCGSGEGDDELLLCDKCDRGFHMKCLRPIVVRVPIGTWLCVDCSDQ) form a PHD-type zinc finger. Residues 122–129 (QKKILHFF) carry the PIP motif motif. Met221 contributes to the substrate binding site. One can recognise an SET domain in the interval 245 to 367 (PPLVVVFDPL…KGERLYYDYN (123 aa)). Residues 255 to 257 (EGY) and 317 to 321 (RFING) contribute to the S-adenosyl-L-methionine site. Residue Arg339 participates in substrate binding. Residue Tyr366 participates in S-adenosyl-L-methionine binding. 369 to 370 (YE) lines the substrate pocket. Residue Tyr373 participates in S-adenosyl-L-methionine binding.

This sequence belongs to the class V-like SAM-binding methyltransferase superfamily. Histone-lysine methyltransferase family. TRX/MLL subfamily. Isoform 1 but not isoform 2 interacts with PCNA1 and PCNA2. Interacts (via PHD domain) with HTR1 (via N-terminus). Isoform 2 interacts with IPS1. In terms of tissue distribution, expressed in leaves, roots, stems, flowers, siliques and developing pollen. Up-regulated in tissues where cell division is active.

It is found in the nucleus. The protein resides in the plastid. Its subcellular location is the chloroplast. The catalysed reaction is L-lysyl(27)-[histone H3] + S-adenosyl-L-methionine = N(6)-methyl-L-lysyl(27)-[histone H3] + S-adenosyl-L-homocysteine + H(+). In terms of biological role, histone methyltransferase that specifically monomethylates 'Lys-27' of histone H3 (H3K27me1). Has much higher activity on nucleosomes containing H3.1 than H3.3. Involved in the formation of constitutive heterochromatin and the silencing of heterochromatic elements. Influences which sets of rRNA gene variants are expressed or silenced. The chain is Histone-lysine N-methyltransferase ATXR5 (ATXR5) from Arabidopsis thaliana (Mouse-ear cress).